The primary structure comprises 819 residues: MNSTNNTDSQNLDPNASEVEKLLDESAEAEEKTDDHTPPSELFILPLNKRPFFPGMAAPLLIEAGPHYEVLTLLAKSSQKHIGLVLTKKEDANTLKIGFNQLHRVGVSARILRIMPIEGGSAQVLLSIEDRIRIVKPVQDKYLKAKVAYHKENKELTEELKAYSISIVSIIKDLLKLNPLFKEELQIFLGHSDFTEPGKLADFSVALTTATREELQEVLETTDMHDRIDKALVLLKKELDLSRLQSSINQKIEATITKSQKEFFLKEQLKTIKKELGLEKDDHAVDLEKFMERLNKRDVPQYAMDVIQDEMDKLQTLETSSAEYAVCRNYLDWLTIVPWGIQTKEYHDLKKAESILNKDHYGLEDIKQRILELISVGKLANGMKGSIICLVGPPGVGKTSIGRSIAKVLHRKFFRFSVGGMRDEAEIKGHRRTYIGAMPGKLVQALKQSAIMNPVIMIDEVDKIGSSYHGDPASALLEVLDPEQNKDFLDHYLDVRVDLSNVLFILTANVLDSIPDPLLDRMEVLRLSGYILEEKLQIATKYLVPRARKEMGLSAQNVSFQPEALKHMINNYAREAGVRTLNENIKKVLRKVALKIVQNQEKNPSKKSRFTITPKNLQDYLGKPIFSSDRFYEKTPVGVATGLAWTSLGGATLYIESVQVPSSSGKADMHLTGQAGDVMKESSQIAWTYLHSALERYAPGRPFFEKSQVHIHIPEGATPKDGPSAGITMVTSLLSLLLDVPVLNNLGMTGELTLTGRVLGIGGIREKLIAARRSKLNVLIFPEDNRRDYDELPAYLKKGLKVHFVTHYDDVFKIAFPGV.

Residues 1-14 (MNSTNNTDSQNLDP) show a composition bias toward polar residues. Residues 1 to 41 (MNSTNNTDSQNLDPNASEVEKLLDESAEAEEKTDDHTPPSE) are disordered. A compositionally biased stretch (basic and acidic residues) spans 18-38 (EVEKLLDESAEAEEKTDDHTP). Positions 42–239 (LFILPLNKRP…KALVLLKKEL (198 aa)) constitute a Lon N-terminal domain. 392–399 (GPPGVGKT) contacts ATP. One can recognise a Lon proteolytic domain in the interval 634–818 (KTPVGVATGL…DDVFKIAFPG (185 aa)). Active-site residues include Ser-724 and Lys-767.

Belongs to the peptidase S16 family. As to quaternary structure, homohexamer. Organized in a ring with a central cavity.

The protein resides in the cytoplasm. It catalyses the reaction Hydrolysis of proteins in presence of ATP.. Functionally, ATP-dependent serine protease that mediates the selective degradation of mutant and abnormal proteins as well as certain short-lived regulatory proteins. Required for cellular homeostasis and for survival from DNA damage and developmental changes induced by stress. Degrades polypeptides processively to yield small peptide fragments that are 5 to 10 amino acids long. Binds to DNA in a double-stranded, site-specific manner. This chain is Lon protease, found in Chlamydia muridarum (strain MoPn / Nigg).